Consider the following 313-residue polypeptide: Isoaspartyl peptidase (313 aa).

Catalysis depends on Thr179, which acts as the Nucleophile. Residues Arg207 to Asp210 and Thr230 to Gly233 contribute to the substrate site.

This sequence belongs to the Ntn-hydrolase family. In terms of assembly, heterotetramer of two alpha and two beta chains arranged as a dimer of alpha/beta heterodimers. Autocleaved. Generates the alpha and beta subunits. The beta subunit is thought to be responsible for the nucleophile hydrolase activity.

It carries out the reaction Cleavage of a beta-linked Asp residue from the N-terminus of a polypeptide.. In terms of biological role, degrades proteins damaged by L-isoaspartyl residue formation (also known as beta-Asp residues). Degrades L-isoaspartyl-containing di- and tripeptides. Acts best on iso-Asp-Leu, followed by iso-Asp-Ala, -His and to a lesser extent iso-Asp-Lys, -Phe and iso-Asp-Leu-Ala. Does not act on internal iso-Asp bonds (Als-iso-Asp-Leu-Ala). Does not act on alpha-Asp bonds. Has poor L-asparaginase activity. This chain is Isoaspartyl peptidase (iaaA), found in Salmonella typhimurium (strain LT2 / SGSC1412 / ATCC 700720).